We begin with the raw amino-acid sequence, 180 residues long: Signal peptidase complex subunit 3 (180 aa).

Residues 1–12 (MHNLLSRANALL) lie on the Cytoplasmic side of the membrane. A helical; Signal-anchor for type II membrane protein transmembrane segment spans residues 13-33 (AFTLWVMAAVTAACFLSTVFL). Over 34 to 180 (DYTVPTKLTV…PTTYTTTRRS (147 aa)) the chain is Lumenal. N-linked (GlcNAc...) asparagine glycosylation is present at asparagine 141.

The protein belongs to the SPCS3 family. As to quaternary structure, component of the signal peptidase complex (SPC) composed of a catalytic subunit sec-11 and three accessory subunits spcs-1, spcs-2 and spcs-3. The complex induces a local thinning of the ER membrane which is used to measure the length of the signal peptide (SP) h-region of protein substrates. This ensures the selectivity of the complex towards h-regions shorter than 18-20 amino acids.

Its subcellular location is the endoplasmic reticulum membrane. Functionally, essential component of the signal peptidase complex (SPC) which catalyzes the cleavage of N-terminal signal sequences from nascent proteins as they are translocated into the lumen of the endoplasmic reticulum. Essential for the SPC catalytic activity, possibly by stabilizing and positioning the active center of the complex close to the lumenal surface. The protein is Signal peptidase complex subunit 3 of Caenorhabditis elegans.